Consider the following 325-residue polypeptide: tRNA (guanine-N(7)-)-methyltransferase (325 aa).

The disordered stretch occupies residues 1–101 (MSEATDKQKQ…LEYPKSPESM (101 aa)). Over residues 51-69 (VSTTPEPEQSDSSATTATI) the composition is skewed to polar residues. S-adenosyl-L-methionine-binding positions include Gly-122, 145–146 (EI), 199–200 (NA), and Cys-219. Asp-222 is an active-site residue. Position 297–299 (297–299 (TEE)) interacts with S-adenosyl-L-methionine.

It belongs to the class I-like SAM-binding methyltransferase superfamily. TrmB family. As to quaternary structure, forms a complex with TRM82.

It localises to the nucleus. It catalyses the reaction guanosine(46) in tRNA + S-adenosyl-L-methionine = N(7)-methylguanosine(46) in tRNA + S-adenosyl-L-homocysteine. Its pathway is tRNA modification; N(7)-methylguanine-tRNA biosynthesis. Functionally, catalyzes the formation of N(7)-methylguanine at position 46 (m7G46) in tRNA. This chain is tRNA (guanine-N(7)-)-methyltransferase, found in Candida albicans (strain SC5314 / ATCC MYA-2876) (Yeast).